Here is a 588-residue protein sequence, read N- to C-terminus: Glutamate--tRNA ligase (588 aa).

A 'HIGH' region motif is present at residues 112-122 (PNPDFYLHLGS).

It belongs to the class-I aminoacyl-tRNA synthetase family. Glutamate--tRNA ligase type 2 subfamily.

Its subcellular location is the cytoplasm. It carries out the reaction tRNA(Glu) + L-glutamate + ATP = L-glutamyl-tRNA(Glu) + AMP + diphosphate. Catalyzes the attachment of glutamate to tRNA(Glu) in a two-step reaction: glutamate is first activated by ATP to form Glu-AMP and then transferred to the acceptor end of tRNA(Glu). In Caldivirga maquilingensis (strain ATCC 700844 / DSM 13496 / JCM 10307 / IC-167), this protein is Glutamate--tRNA ligase.